The sequence spans 219 residues: Probable glucosamine 6-phosphate N-acetyltransferase (219 aa).

The region spanning 42–198 is the N-acetyltransferase domain; sequence MKVRPLKDTD…EGPTLKRNAT (157 aa). Substrate contacts are provided by residues threonine 64, 111-114, and 123-125; these read KFIH and EDV. 133 to 138 lines the acetyl-CoA pocket; sequence GKQLGK. Substrate contacts are provided by residues 154 to 155 and arginine 186; that span reads YK.

It belongs to the acetyltransferase family. GNA1 subfamily.

The catalysed reaction is D-glucosamine 6-phosphate + acetyl-CoA = N-acetyl-D-glucosamine 6-phosphate + CoA + H(+). It functions in the pathway nucleotide-sugar biosynthesis; UDP-N-acetyl-alpha-D-glucosamine biosynthesis; N-acetyl-alpha-D-glucosamine 1-phosphate from alpha-D-glucosamine 6-phosphate (route I): step 1/2. The sequence is that of Probable glucosamine 6-phosphate N-acetyltransferase from Drosophila melanogaster (Fruit fly).